Consider the following 1375-residue polypeptide: DNA-directed RNA polymerase subunit beta (1375 aa).

It belongs to the RNA polymerase beta chain family. As to quaternary structure, the RNAP catalytic core consists of 2 alpha, 1 beta, 1 beta' and 1 omega subunit. When a sigma factor is associated with the core the holoenzyme is formed, which can initiate transcription.

It catalyses the reaction RNA(n) + a ribonucleoside 5'-triphosphate = RNA(n+1) + diphosphate. DNA-dependent RNA polymerase catalyzes the transcription of DNA into RNA using the four ribonucleoside triphosphates as substrates. This is DNA-directed RNA polymerase subunit beta from Oleidesulfovibrio alaskensis (strain ATCC BAA-1058 / DSM 17464 / G20) (Desulfovibrio alaskensis).